A 333-amino-acid chain; its full sequence is D-2-hydroxyacid dehydrogenase (NAD+) (333 aa).

Tyr100 lines the 4-methyl-2-oxopentanoate pocket. NAD(+) contacts are provided by His155, Ile156, Asp175, Val205, Asn211, Thr232, Arg234, and Asp258. Arg234 is a catalytic residue. Residue Glu263 is part of the active site. His295 is a 4-methyl-2-oxopentanoate binding site. His295 functions as the Proton donor in the catalytic mechanism.

It belongs to the D-isomer specific 2-hydroxyacid dehydrogenase family. In terms of assembly, homodimer.

It catalyses the reaction a (2R)-2-hydroxycarboxylate + NAD(+) = a 2-oxocarboxylate + NADH + H(+). It carries out the reaction (2R)-hydroxy-4-methylpentanoate + NAD(+) = 4-methyl-2-oxopentanoate + NADH + H(+). The enzyme catalyses (R)-3-phenyllactate + NAD(+) = 3-phenylpyruvate + NADH + H(+). Its activity is regulated as follows. Completely inhibited In the presence of 0.1 mM Hg(2+). No influence on the activity could be detected with Mg(2+) and Ca(2+) and only very weak effects with Cd(2+), Co(2+) and Mn(2+). Reducing agents and thiol group reagents do not affect catalytic activity. Its function is as follows. Catalyzes the NADH-dependent reversible reduction of various 2-ketocarboxylic acids to the corresponding D-2-hydroxycarboxylic acids. In vitro can use various substrates, including 4-methyl-2-oxopentanoate (2-oxoisocaproate), 2-oxopentanoate, 2-oxohexanoate and phenylpyruvate. The polypeptide is D-2-hydroxyacid dehydrogenase (NAD+) (Lacticaseibacillus paracasei (Lactobacillus paracasei)).